The primary structure comprises 244 residues: Inner kinetochore subunit fta7 (244 aa).

Belongs to the CENP-Q/OKP1 family. Component of the heterotetrameric kinetochore subcomplex COMA, which consists of fta2, fta7, mal2 and mis17. The COMA subcomplex is part of a larger constitutive centromere-associated network (CCAN) (also known as central kinetochore Sim4 complex in fission yeast), which is composed of at least cnl2, cnp3, cnp20, fta1, fta2, fta3, fta4, fta6, fta7, mal2, mhf1, mhf2, mis6, mis15, mis17, sim4 and wip1.

Its subcellular location is the nucleus. The protein resides in the chromosome. It localises to the centromere. The protein localises to the kinetochore. It is found in the cytoplasm. Its subcellular location is the cytoskeleton. The protein resides in the microtubule organizing center. It localises to the spindle pole body. In terms of biological role, component of the kinetochore, a multiprotein complex that assembles on centromeric DNA and attaches chromosomes to spindle microtubules, mediating chromosome segregation and sister chromatid segregation during meiosis and mitosis. Component of the inner kinetochore COMA complex, which connects centromere-associated proteins and the outer kinetochore. COMA interacts with other inner kinetochore proteins to form the inner kinetochore constitutive centromere-associated network (CCAN), which serves as a structural platform for outer kinetochore assembly. This chain is Inner kinetochore subunit fta7 (fta7), found in Schizosaccharomyces pombe (strain 972 / ATCC 24843) (Fission yeast).